The sequence spans 165 residues: NADPH-dependent 7-cyano-7-deazaguanine reductase (165 aa).

Cys-56 acts as the Thioimide intermediate in catalysis. Asp-63 (proton donor) is an active-site residue. Substrate contacts are provided by residues 78–80 (VES) and 97–98 (HE).

This sequence belongs to the GTP cyclohydrolase I family. QueF type 1 subfamily.

It is found in the cytoplasm. It catalyses the reaction 7-aminomethyl-7-carbaguanine + 2 NADP(+) = 7-cyano-7-deazaguanine + 2 NADPH + 3 H(+). The protein operates within tRNA modification; tRNA-queuosine biosynthesis. Its function is as follows. Catalyzes the NADPH-dependent reduction of 7-cyano-7-deazaguanine (preQ0) to 7-aminomethyl-7-deazaguanine (preQ1). In Oceanobacillus iheyensis (strain DSM 14371 / CIP 107618 / JCM 11309 / KCTC 3954 / HTE831), this protein is NADPH-dependent 7-cyano-7-deazaguanine reductase.